Consider the following 701-residue polypeptide: Nucleolar transcription factor 1-B (701 aa).

The interval 1 to 21 (MNGAAGGDTQGKMTAPKDQDQ) is disordered. 5 DNA-binding regions (HMG box) span residues 112–180 (PKKP…AKFR), 196–264 (PEKP…REYM), 298–362 (TKPP…MRFL), 422–489 (PETP…SDMR), and 508–574 (KKAP…DTWM). The interval 382 to 426 (MKRKRTNTPASKMATEDAAKVKSRSGQADKKKAAEERAKLPETPK) is disordered. The span at 408–426 (QADKKKAAEERAKLPETPK) shows a compositional bias: basic and acidic residues. The tract at residues 584–701 (AYKEQNTNKR…SADSSDSDSN (118 aa)) is disordered. Residues 597-612 (TKIQAPSSKSKLVIQS) are compositionally biased toward polar residues. A compositionally biased stretch (acidic residues) spans 615–682 (DDDEDDEDDE…DNEEDDDDNE (68 aa)). Residues 683–695 (SGSSSSSSSSADS) are compositionally biased toward low complexity.

In terms of assembly, XUBF consists of 2 polypeptides of 82 and 85 kDa, encoded by the same or closely related genes.

It localises to the nucleus. Its function is as follows. UBF recognizes the ribosomal RNA gene promotor and activates transcription mediated by RNA polymerase I through cooperative interactions with the species-specific factor SL1. It binds specifically to the upstream control element. This Xenopus laevis (African clawed frog) protein is Nucleolar transcription factor 1-B (ubtf-b).